The primary structure comprises 95 residues: MSVLTFLKPRGSGSVARERLQLILAHERVENGRPDLIITLREEILNVIAKHVTVERDKVQIKLERGEGVSTLGVDIEFPVDAVIKPKAKAKRAIA.

The protein belongs to the MinE family.

Functionally, prevents the cell division inhibition by proteins MinC and MinD at internal division sites while permitting inhibition at polar sites. This ensures cell division at the proper site by restricting the formation of a division septum at the midpoint of the long axis of the cell. The chain is Cell division topological specificity factor from Methylorubrum extorquens (strain CM4 / NCIMB 13688) (Methylobacterium extorquens).